A 467-amino-acid chain; its full sequence is Argininosuccinate lyase (467 aa).

The protein belongs to the lyase 1 family. Argininosuccinate lyase subfamily.

The protein resides in the cytoplasm. The catalysed reaction is 2-(N(omega)-L-arginino)succinate = fumarate + L-arginine. Its pathway is amino-acid biosynthesis; L-arginine biosynthesis; L-arginine from L-ornithine and carbamoyl phosphate: step 3/3. The protein is Argininosuccinate lyase of Sinorhizobium fredii (strain NBRC 101917 / NGR234).